Reading from the N-terminus, the 119-residue chain is Ribonuclease P protein component (119 aa).

Belongs to the RnpA family. Consists of a catalytic RNA component (M1 or rnpB) and a protein subunit.

The enzyme catalyses Endonucleolytic cleavage of RNA, removing 5'-extranucleotides from tRNA precursor.. Functionally, RNaseP catalyzes the removal of the 5'-leader sequence from pre-tRNA to produce the mature 5'-terminus. It can also cleave other RNA substrates such as 4.5S RNA. The protein component plays an auxiliary but essential role in vivo by binding to the 5'-leader sequence and broadening the substrate specificity of the ribozyme. This Yersinia enterocolitica serotype O:8 / biotype 1B (strain NCTC 13174 / 8081) protein is Ribonuclease P protein component.